Reading from the N-terminus, the 76-residue chain is Acyl carrier protein (76 aa).

In terms of domain architecture, Carrier spans 2–76 (KDNFTRLQSI…QDVLNYLERN (75 aa)). Serine 37 carries the post-translational modification O-(pantetheine 4'-phosphoryl)serine.

It belongs to the acyl carrier protein (ACP) family. In terms of processing, 4'-phosphopantetheine is transferred from CoA to a specific serine of apo-ACP by AcpS. This modification is essential for activity because fatty acids are bound in thioester linkage to the sulfhydryl of the prosthetic group.

The protein resides in the plastid. Its subcellular location is the chloroplast. It functions in the pathway lipid metabolism; fatty acid biosynthesis. Functionally, carrier of the growing fatty acid chain in fatty acid biosynthesis. This is Acyl carrier protein from Phaeodactylum tricornutum (strain CCAP 1055/1).